Reading from the N-terminus, the 426-residue chain is Putative phosphate permease TC_0064 (426 aa).

The next 11 helical transmembrane spans lie at 1-21 (MWWL…NIGA), 37-57 (LTLR…AVVL), 83-103 (VFGM…ASFF), 104-124 (GWPV…GIIL), 140-160 (VSWL…FSFI), 183-203 (AIII…ARVV), 207-227 (VAFR…IWGV), 260-280 (LVVE…MSFA), 309-329 (VLFI…ATWG), 365-385 (FGFP…VGLA), and 399-419 (IVLS…MFFL).

This sequence belongs to the inorganic phosphate transporter (PiT) (TC 2.A.20) family.

The protein localises to the cell membrane. In terms of biological role, potential transporter for phosphate. This Chlamydia muridarum (strain MoPn / Nigg) protein is Putative phosphate permease TC_0064.